The following is an 859-amino-acid chain: Heat shock protein 105 kDa (859 aa).

Serine 2 bears the N-acetylserine mark. Lysine 471 carries the N6-acetyllysine modification. A phosphoserine mark is found at serine 509 and serine 510. Disordered regions lie at residues 515 to 585 (MDCQ…PPEA) and 797 to 859 (CEPV…MDLD). Residues 533-555 (QQDNNEAGTQPQVQTDGHQTSQS) are compositionally biased toward polar residues. Position 558 is a phosphoserine (serine 558). Threonine 562 is modified (phosphothreonine). Basic and acidic residues-rich tracts occupy residues 564-585 (EENK…PPEA) and 806-815 (PKIESPKLER). At serine 810 the chain carries Phosphoserine. Threonine 816 is modified (phosphothreonine). The span at 822–831 (TDKKEEDLDG) shows a compositional bias: basic and acidic residues. Over residues 850–859 (EKSSINMDLD) the composition is skewed to polar residues.

The protein belongs to the heat shock protein 70 family. As to quaternary structure, interacts with HSPA8/HSC70. Interacts with HSPA1A (via NBD) and HSPA1B (via NBD). Post-translationally, phosphorylation on Ser-509 may be important for regulation of the HSPA8/HSC70 chaperone activity.

It is found in the cytoplasm. Functionally, acts as a nucleotide-exchange factor (NEF) for chaperone proteins HSPA1A and HSPA1B, promoting the release of ADP from HSPA1A/B thereby triggering substrate release. Prevents the aggregation of denatured proteins in cells under severe stress, on which the ATP levels decrease markedly. Inhibits HSPA8/HSC70 ATPase and chaperone activities. This chain is Heat shock protein 105 kDa (HSPH1), found in Bos taurus (Bovine).